The following is a 385-amino-acid chain: MSWQQRIDTALATRRAADALRTRRVVEQGAGRWLTVGDSRYCNFSSNDYLGLSQHPAIVRAWQQGAEQYGVGSGGSGHVSGYTRAHYALESELAEWLGYPRALLFISGFAANQAVIAALTGKEDRIVADKLSHASLLEAASFSPAQLRRFAHNDVSQLAALLDKPCDGQQLAVTEGVFSMDGDSAPLAAIAEQVRRAGAWLLVDDAHGIAVTGHKGRGSCQQQEVKPELLVVTFGKGFGVSGAAVLCSEAVATYFEQFARHLIYSTSMPPAQAVALSAALSVIRGEEGDQRRTALAGLIQRFRHGAAALPGRITHSQSAIQPLIVGDNSRALSLAERLRQKGCWVTAIRPPTVPAGTARLRLTLTAAHQPEDIDRLLEVLHESGE.

R21 provides a ligand contact to substrate. 108–109 (GF) contacts pyridoxal 5'-phosphate. H133 contacts substrate. Pyridoxal 5'-phosphate contacts are provided by S179, H207, and T233. K236 carries the post-translational modification N6-(pyridoxal phosphate)lysine. Residue T352 coordinates substrate.

It belongs to the class-II pyridoxal-phosphate-dependent aminotransferase family. BioF subfamily. As to quaternary structure, homodimer. The cofactor is pyridoxal 5'-phosphate.

The enzyme catalyses 6-carboxyhexanoyl-[ACP] + L-alanine + H(+) = (8S)-8-amino-7-oxononanoate + holo-[ACP] + CO2. Its pathway is cofactor biosynthesis; biotin biosynthesis. Its function is as follows. Catalyzes the decarboxylative condensation of pimeloyl-[acyl-carrier protein] and L-alanine to produce 8-amino-7-oxononanoate (AON), [acyl-carrier protein], and carbon dioxide. This chain is 8-amino-7-oxononanoate synthase, found in Pseudescherichia vulneris (Escherichia vulneris).